The sequence spans 193 residues: CD70 antigen (193 aa).

At 1-17 (MPEEGSGCSVRRRPYGC) the chain is on the cytoplasmic side. The helical; Signal-anchor for type II membrane protein transmembrane segment at 18 to 38 (VLRAALVPLVAGLVICLVVCI) threads the bilayer. The Extracellular segment spans residues 39–193 (QRFAQAQQQL…TFFGVQWVRP (155 aa)). Residues 56 to 191 (DVAELQLNHT…DETFFGVQWV (136 aa)) form the THD domain. Asn63 carries N-linked (GlcNAc...) asparagine glycosylation. Disulfide bonds link Cys115/Cys151 and Cys133/Cys168. Residue Asn170 is glycosylated (N-linked (GlcNAc...) asparagine).

It belongs to the tumor necrosis factor family. Homotrimer. Post-translationally, N-glycosylated.

The protein localises to the cell membrane. Functionally, expressed at the plasma membrane of B cells, it is the ligand of the CD27 receptor which is specifically expressed at the surface of T cells. The CD70-CD27 signaling pathway mediates antigen-specific T cell activation and expansion which in turn provides immune surveillance of B cells. The protein is CD70 antigen of Homo sapiens (Human).